The sequence spans 159 residues: Putative pre-16S rRNA nuclease (159 aa).

The protein belongs to the YqgF nuclease family.

Its subcellular location is the cytoplasm. Its function is as follows. Could be a nuclease involved in processing of the 5'-end of pre-16S rRNA. The protein is Putative pre-16S rRNA nuclease of Bartonella henselae (strain ATCC 49882 / DSM 28221 / CCUG 30454 / Houston 1) (Rochalimaea henselae).